Reading from the N-terminus, the 460-residue chain is Probable protein phosphatase 2C 38 (460 aa).

Disordered regions lie at residues 1–30 and 83–111; these read MVAVTGGRPPGLQDAPGAPPPAPAAEAVPS and RPMRRRRRGGSSSSSSSPRDREPRDGRIA. Positions 100–109 are enriched in basic and acidic residues; sequence PRDREPRDGR. Positions 118–432 constitute a PPM-type phosphatase domain; that stretch reads AASLYTMRGN…DDCAVVCLFL (315 aa). Residues aspartate 154 and glycine 155 each coordinate Mn(2+). Residues 192–219 are disordered; that stretch reads VTSSMTEGGGTERMDRDTETPLGTEENG. The span at 201 to 210 shows a compositional bias: basic and acidic residues; the sequence is GTERMDRDTE. Positions 377 and 423 each coordinate Mn(2+).

It belongs to the PP2C family. Mg(2+) is required as a cofactor. Mn(2+) serves as cofactor.

It carries out the reaction O-phospho-L-seryl-[protein] + H2O = L-seryl-[protein] + phosphate. The enzyme catalyses O-phospho-L-threonyl-[protein] + H2O = L-threonyl-[protein] + phosphate. This chain is Probable protein phosphatase 2C 38, found in Oryza sativa subsp. japonica (Rice).